We begin with the raw amino-acid sequence, 324 residues long: Putative 12-oxophytodienoate reductase-like protein 1 (324 aa).

The residue at position 1 (Met1) is an N-acetylmethionine. FMN contacts are provided by residues Pro14–Ala16, Ala47, and Gln89. A compositionally biased stretch (polar residues) spans Gln99–Asp113. The tract at residues Gln99–Arg128 is disordered. Residue His160 to His163 participates in substrate binding. Catalysis depends on Tyr165, which acts as the Proton donor. An FMN-binding site is contributed by Arg212. Arg252 serves as a coordination point for substrate. Residues Gly282 and Gly303 to Arg304 each bind FMN.

The protein belongs to the NADH:flavin oxidoreductase/NADH oxidase family. The cofactor is FMN.

Putative oxophytodienoate reductase that may be involved in the biosynthesis or metabolism of oxylipin signaling molecules. This is Putative 12-oxophytodienoate reductase-like protein 1 from Arabidopsis thaliana (Mouse-ear cress).